The primary structure comprises 441 residues: Squalene synthase (441 aa).

Helical transmembrane passes span 293 to 313 and 420 to 440; these read SFQFCAIPQVMAIATLALVFG and FKFNVLLSILFTVFGALYWYA.

The protein belongs to the phytoene/squalene synthase family. Mg(2+) serves as cofactor.

The protein resides in the endoplasmic reticulum membrane. The catalysed reaction is 2 (2E,6E)-farnesyl diphosphate + NADPH + H(+) = squalene + 2 diphosphate + NADP(+). The enzyme catalyses 2 (2E,6E)-farnesyl diphosphate + NADH + H(+) = squalene + 2 diphosphate + NAD(+). It functions in the pathway terpene metabolism; lanosterol biosynthesis; lanosterol from farnesyl diphosphate: step 1/3. In terms of biological role, catalyzes the condensation of 2 two farnesyl pyrophosphate moieties to form squalene. It is the first committed enzyme of the sterol biosynthesis pathway. Required for the biosynthesis of ergosterol. This chain is Squalene synthase (ERG9), found in Eremothecium gossypii (strain ATCC 10895 / CBS 109.51 / FGSC 9923 / NRRL Y-1056) (Yeast).